We begin with the raw amino-acid sequence, 377 residues long: Queuine tRNA-ribosyltransferase (377 aa).

Aspartate 89 functions as the Proton acceptor in the catalytic mechanism. Substrate contacts are provided by residues 89–93, aspartate 143, glutamine 187, and glycine 214; that span reads DSGGF. The segment at 245 to 251 is RNA binding; that stretch reads GVGKPED. Aspartate 264 serves as the catalytic Nucleophile. The tract at residues 269–273 is RNA binding; important for wobble base 34 recognition; it reads TRNAR. Cysteine 302, cysteine 304, cysteine 307, and histidine 333 together coordinate Zn(2+).

This sequence belongs to the queuine tRNA-ribosyltransferase family. Homodimer. Within each dimer, one monomer is responsible for RNA recognition and catalysis, while the other monomer binds to the replacement base PreQ1. It depends on Zn(2+) as a cofactor.

It catalyses the reaction 7-aminomethyl-7-carbaguanine + guanosine(34) in tRNA = 7-aminomethyl-7-carbaguanosine(34) in tRNA + guanine. It participates in tRNA modification; tRNA-queuosine biosynthesis. Functionally, catalyzes the base-exchange of a guanine (G) residue with the queuine precursor 7-aminomethyl-7-deazaguanine (PreQ1) at position 34 (anticodon wobble position) in tRNAs with GU(N) anticodons (tRNA-Asp, -Asn, -His and -Tyr). Catalysis occurs through a double-displacement mechanism. The nucleophile active site attacks the C1' of nucleotide 34 to detach the guanine base from the RNA, forming a covalent enzyme-RNA intermediate. The proton acceptor active site deprotonates the incoming PreQ1, allowing a nucleophilic attack on the C1' of the ribose to form the product. After dissociation, two additional enzymatic reactions on the tRNA convert PreQ1 to queuine (Q), resulting in the hypermodified nucleoside queuosine (7-(((4,5-cis-dihydroxy-2-cyclopenten-1-yl)amino)methyl)-7-deazaguanosine). The sequence is that of Queuine tRNA-ribosyltransferase from Shewanella denitrificans (strain OS217 / ATCC BAA-1090 / DSM 15013).